A 304-amino-acid polypeptide reads, in one-letter code: Protein Largen (304 aa).

The segment covering 1–22 (MSAKSKGNPSSSSAAEGPPAAS) has biased composition (low complexity). Disordered regions lie at residues 1–27 (MSAK…TKVK), 66–109 (QLED…PPAH), 114–133 (LTVL…TPVR), and 236–304 (EPVH…TTTV). Residues 33 to 70 (IVEDLELVLGDLKDVAKELKEVVDQIDTLTSDLQLEDE) adopt a coiled-coil conformation. Over residues 77–91 (TDTLNSSSSGTTASS) the composition is skewed to low complexity. Pro residues-rich tracts occupy residues 120–129 (PNPPPPPPRL) and 275–289 (FPPP…PAAP).

In terms of biological role, regulator of cell size that promotes cell size increase independently of mTOR and Hippo signaling pathways. Acts by stimulating the translation of specific mRNAs, including those encoding proteins affecting mitochondrial functions. Increases mitochondrial mass and respiration. The protein is Protein Largen (Prr16) of Mus musculus (Mouse).